The sequence spans 339 residues: MTLDIQADVSLKPFNSFGVEVKAKWFAQAHSDDEVREALAYCATHQLPLLVIGGGSNLLLTADIQALVLRMATRGIRLLSDDGQRVVVEAEAGETWHPFVQWTLEQGLSGLENLSLIPGTVGAAPMQNIGAYGVEIKDVFAGLTALDRQTGELREFDLAQCQFAYRDSLFKHQAGRWLILRVRFALNRVDHLHLEYGPVRQRLSEQGIEQPTASDVSRAICSIRSEKLPDPAVLGNAGSFFKNPVVPAALAAQIKQSHPGLVGYPQADGQVKLAAGWLIEQAGWKGFREADAGVHRLQSLVLVNYGGASGLQLLELARRIQRDIAERFSVELEMEPNLY.

Residues 18 to 189 form the FAD-binding PCMH-type domain; that stretch reads GVEVKAKWFA…LRVRFALNRV (172 aa). R166 is an active-site residue. S239 functions as the Proton donor in the catalytic mechanism. E335 is a catalytic residue.

It belongs to the MurB family. It depends on FAD as a cofactor.

It localises to the cytoplasm. It carries out the reaction UDP-N-acetyl-alpha-D-muramate + NADP(+) = UDP-N-acetyl-3-O-(1-carboxyvinyl)-alpha-D-glucosamine + NADPH + H(+). The protein operates within cell wall biogenesis; peptidoglycan biosynthesis. Cell wall formation. The chain is UDP-N-acetylenolpyruvoylglucosamine reductase from Pseudomonas fluorescens (strain ATCC BAA-477 / NRRL B-23932 / Pf-5).